Reading from the N-terminus, the 157-residue chain is Small ribosomal subunit protein uS7 (157 aa).

Belongs to the universal ribosomal protein uS7 family. In terms of assembly, part of the 30S ribosomal subunit. Contacts proteins S9 and S11.

Its function is as follows. One of the primary rRNA binding proteins, it binds directly to 16S rRNA where it nucleates assembly of the head domain of the 30S subunit. Is located at the subunit interface close to the decoding center, probably blocks exit of the E-site tRNA. The protein is Small ribosomal subunit protein uS7 of Francisella tularensis subsp. tularensis (strain FSC 198).